Consider the following 304-residue polypeptide: Ornithine carbamoyltransferase (304 aa).

Carbamoyl phosphate is bound by residues 47–50, arginine 98, and 125–128; these read STRT and HPCQ. Residues asparagine 156, aspartate 221, and 225–226 contribute to the L-ornithine site; that span reads SM. Carbamoyl phosphate contacts are provided by residues 262–263 and arginine 290; that span reads CL.

This sequence belongs to the aspartate/ornithine carbamoyltransferase superfamily. OTCase family.

The protein resides in the cytoplasm. It catalyses the reaction carbamoyl phosphate + L-ornithine = L-citrulline + phosphate + H(+). Its pathway is amino-acid biosynthesis; L-arginine biosynthesis; L-arginine from L-ornithine and carbamoyl phosphate: step 1/3. Functionally, reversibly catalyzes the transfer of the carbamoyl group from carbamoyl phosphate (CP) to the N(epsilon) atom of ornithine (ORN) to produce L-citrulline. The sequence is that of Ornithine carbamoyltransferase from Methanococcus maripaludis (strain C5 / ATCC BAA-1333).